We begin with the raw amino-acid sequence, 197 residues long: Na(+)-translocating NADH-quinone reductase subunit E (197 aa).

6 helical membrane passes run 11-31 (SVFI…FLAV), 35-55 (VSTA…SVPA), 76-96 (FLKF…LEMF), 108-128 (LGIY…VSFM), 139-159 (VVYG…LAGI), and 175-195 (LGIT…FSGI).

Belongs to the NqrDE/RnfAE family. In terms of assembly, composed of six subunits; NqrA, NqrB, NqrC, NqrD, NqrE and NqrF.

Its subcellular location is the cell inner membrane. It catalyses the reaction a ubiquinone + n Na(+)(in) + NADH + H(+) = a ubiquinol + n Na(+)(out) + NAD(+). Functionally, NQR complex catalyzes the reduction of ubiquinone-1 to ubiquinol by two successive reactions, coupled with the transport of Na(+) ions from the cytoplasm to the periplasm. NqrA to NqrE are probably involved in the second step, the conversion of ubisemiquinone to ubiquinol. The sequence is that of Na(+)-translocating NADH-quinone reductase subunit E from Neisseria meningitidis serogroup A / serotype 4A (strain DSM 15465 / Z2491).